A 402-amino-acid polypeptide reads, in one-letter code: Speedy protein E5 (402 aa).

Positions 1–89 (MDRTETRFRK…EEPEKELAPE (89 aa)) are disordered. Polar residues predominate over residues 16–39 (EKITTSRQPQPQNEQSPQRSTSGY). Acidic residues predominate over residues 76 to 89 (DESAEEPEKELAPE).

This sequence belongs to the Speedy/Ringo family.

This chain is Speedy protein E5 (SPDYE5), found in Homo sapiens (Human).